The following is a 314-amino-acid chain: Methionyl-tRNA formyltransferase (314 aa).

113-116 (SLLP) serves as a coordination point for (6S)-5,6,7,8-tetrahydrofolate.

This sequence belongs to the Fmt family.

It catalyses the reaction L-methionyl-tRNA(fMet) + (6R)-10-formyltetrahydrofolate = N-formyl-L-methionyl-tRNA(fMet) + (6S)-5,6,7,8-tetrahydrofolate + H(+). Its function is as follows. Attaches a formyl group to the free amino group of methionyl-tRNA(fMet). The formyl group appears to play a dual role in the initiator identity of N-formylmethionyl-tRNA by promoting its recognition by IF2 and preventing the misappropriation of this tRNA by the elongation apparatus. The protein is Methionyl-tRNA formyltransferase of Pseudomonas syringae pv. syringae (strain B728a).